A 147-amino-acid polypeptide reads, in one-letter code: Transcriptional repressor NrdR (147 aa).

A zinc finger spans residues 3–34; that stretch reads CPYCGNVETTVVETRESDEGDAVRRRRRCSAC. The region spanning 49–139 is the ATP-cone domain; sequence PAVVKKNGDR…VYREFEDIDA (91 aa).

It belongs to the NrdR family. Zn(2+) serves as cofactor.

Its function is as follows. Negatively regulates transcription of bacterial ribonucleotide reductase nrd genes and operons by binding to NrdR-boxes. In Leptothrix cholodnii (strain ATCC 51168 / LMG 8142 / SP-6) (Leptothrix discophora (strain SP-6)), this protein is Transcriptional repressor NrdR.